The primary structure comprises 1153 residues: Duffy receptor beta form (1153 aa).

An N-terminal signal peptide occupies residues 1-21 (MEGKKKRPLFFLLVLLLSHKA). Topologically, residues 22–1085 (NNVLFERMKG…YECFTKGSST (1064 aa)) are extracellular. Residues Asn-134, Asn-179, and Asn-202 are each glycosylated (N-linked (GlcNAc...) asparagine). Cystine bridges form between Cys-214/Cys-243 and Cys-227/Cys-234. Residues Asn-252 and Asn-348 are each glycosylated (N-linked (GlcNAc...) asparagine). 4 disulfides stabilise this stretch: Cys-297–Cys-374, Cys-412–Cys-429, Cys-424–Cys-504, and Cys-433–Cys-502. Residues Asn-430 and Asn-467 are each glycosylated (N-linked (GlcNAc...) asparagine). Disordered regions lie at residues 520 to 545 (LKSA…GAEK), 565 to 591 (DEAA…DNIE), 612 to 631 (RGAT…SYSG), and 655 to 981 (ENSE…LYSH). Composition is skewed to polar residues over residues 531 to 542 (SHSTIQPMSSSG) and 574 to 586 (NGNQ…NIKG). N-linked (GlcNAc...) asparagine glycosylation is found at Asn-576 and Asn-626. Residues 661–675 (LETKHKIFEPSKDNS) are compositionally biased toward basic and acidic residues. Over residues 677-733 (NSENSGSMEFKATSSNPITEAVESSSAEGQVQEDSAHRSVNTGRDNSTISAATSDDG) the composition is skewed to polar residues. N-linked (GlcNAc...) asparagine glycosylation is present at Asn-722. Positions 791 to 800 (IDGKNVDIAE) are enriched in basic and acidic residues. A compositionally biased stretch (polar residues) spans 819–834 (TDNGNVPRSGNKQNEG). 2 N-linked (GlcNAc...) asparagine glycosylation sites follow: Asn-847 and Asn-856. Over residues 867-878 (GNEKDFQKHDFM) the composition is skewed to basic and acidic residues. A compositionally biased stretch (low complexity) spans 884–942 (NDQTSSDQTSSDQTSSNQTSSDQTSSNQTSSDQTSSDQISSDQTSSDQTSSNQTSSDQT). N-linked (GlcNAc...) asparagine glycosylation is found at Asn-900, Asn-910, and Asn-935. Residues 945-969 (TEEHHRDNVRNPEIKSSEDMSKGDF) show a composition bias toward basic and acidic residues. Over residues 971–981 (RNSNSNELYSH) the composition is skewed to polar residues. The chain crosses the membrane as a helical span at residues 1086-1106 (GIGIVYFATGGAFLIILLLFV). The Cytoplasmic portion of the chain corresponds to 1107–1153 (SKNVASNDYEEEATFDEFVEYSDDIHRTPLMPNHIEHMQQFTPLDYS).

It localises to the membrane. In terms of biological role, binds to Neu5Gc-sialylated receptors on macaque erythrocytes. This is Duffy receptor beta form from Plasmodium knowlesi.